The following is a 66-amino-acid chain: uncharacterized protein (66 aa).

This is an uncharacterized protein from Human cytomegalovirus (strain AD169) (HHV-5).